Reading from the N-terminus, the 547-residue chain is DEAD-box ATP-dependent RNA helicase 31 (547 aa).

Residues Met-1 to Gly-34 are compositionally biased toward acidic residues. Residues Met-1–Ser-74 form a disordered region. The segment covering Ile-53 to Gly-70 has biased composition (basic and acidic residues). The Q motif motif lies at Thr-79–Glu-107. The Helicase ATP-binding domain maps to Leu-110–Phe-293. Position 123–130 (Ala-123–Thr-130) interacts with ATP. Positions Asp-241–Asp-244 match the DEAD box motif. The Helicase C-terminal domain maps to Leu-327–Ala-478.

Belongs to the DEAD box helicase family.

The enzyme catalyses ATP + H2O = ADP + phosphate + H(+). This chain is DEAD-box ATP-dependent RNA helicase 31, found in Oryza sativa subsp. japonica (Rice).